The following is a 297-amino-acid chain: Polyhedral envelope protein (297 aa).

It belongs to the baculoviridae PE family.

It localises to the virion membrane. In terms of biological role, major component of the polyhedra envelope. This chain is Polyhedral envelope protein, found in Orgyia pseudotsugata (Douglas-fir tussock moth).